Here is an 810-residue protein sequence, read N- to C-terminus: Interleukin-4 receptor subunit alpha (810 aa).

The N-terminal stretch at 1-25 (MGRLCTKFLTSVGCLILLLVTGSGS) is a signal peptide. Topologically, residues 26 to 233 (IKVLGEPTCF…NHFQLPLIQR (208 aa)) are extracellular. Cysteines 34 and 44 form a disulfide. N-linked (GlcNAc...) asparagine glycosylation occurs at asparagine 72. Residues cysteine 75 and cysteine 87 are joined by a disulfide bond. In terms of domain architecture, Fibronectin type-III spans 126-224 (APDNLTLHTN…EWSPSITWYN (99 aa)). 3 N-linked (GlcNAc...) asparagine glycosylation sites follow: asparagine 129, asparagine 135, and asparagine 163. Residue serine 165 is modified to Phosphoserine. Residues 213–217 (WSEWS) carry the WSXWS motif motif. The chain crosses the membrane as a helical span at residues 234–257 (LPLGVTISCLCIPLFCLFCYFSIT). Over 258–810 (KIKKIWWDQI…PVGALGIAVS (553 aa)) the chain is Cytoplasmic. A Box 1 motif motif is present at residues 263–271 (WWDQIPTPA). Residues 441-557 (GSGQASVSWA…ESWEQILHMS (117 aa)) form a required for IRS1 activation and IL4-induced cell growth region. Positions 460–482 (ATCQVTEQPSHPGPLSGSPAQSA) are disordered. Tyrosine 500 carries the post-translational modification Phosphotyrosine. The disordered stretch occupies residues 510–546 (APNPGELAPEQQQADHLEEEEPPSPADPHSSGPPMQP). A required for IL4-induced gene expression region spans residues 557–653 (SVLQHGAAAG…SSVPLFTFGL (97 aa)). Residues tyrosine 575, tyrosine 603, and tyrosine 631 each carry the phosphotyrosine modification. The segment at 586–672 (AAQDPGVPGV…NSDPPKSPPE (87 aa)) is disordered. Positions 635–647 (QNPVPNQSPSSVP) are enriched in low complexity. An ITIM motif motif is present at residues 707–712 (IVYSSL). Positions 766–810 (PPEANLMSAPKTPSNLSGEGKGPGHSPVPSQTTEVPVGALGIAVS) are disordered.

This sequence belongs to the type I cytokine receptor family. Type 4 subfamily. The functional IL4 receptor is formed by initial binding of IL4 to IL4R. Subsequent recruitment to the complex of the common gamma chain, in immune cells, creates a type I receptor and, in non-immune cells, of IL13RA1 forms a type II receptor. IL4R can also interact with the IL13/IL13RA1 complex to form a similar type II receptor. Interacts with the SH2-containing phosphatases, PTPN6/SHIP1, PTPN11/SHIP2 and INPP5D/SHIP. Interacts with JAK3. Interacts with PIK3C3. Interacts with JAK1 through a Box 1-containing region; inhibited by SOCS5. Interacts with SOCS5; inhibits IL4 signaling. Interacts with CLM1. Interacts with IL13RA2. Post-translationally, on IL4 binding, phosphorylated on C-terminal tyrosine residues. Soluble IL4R can also be produced by proteolytic cleavage at the cell surface (shedding). Expressed in both Th1 and Th2 cells.

The protein localises to the cell membrane. It localises to the secreted. Its function is as follows. Receptor for both interleukin 4 and interleukin 13. Couples to the JAK1/2/3-STAT6 pathway. The IL4 response is involved in promoting Th2 differentiation. The IL4/IL13 responses are involved in regulating IgE production and, chemokine and mucus production at sites of allergic inflammation. In certain cell types, can signal through activation of insulin receptor substrates, IRS1/IRS2. This chain is Interleukin-4 receptor subunit alpha (Il4r), found in Mus musculus (Mouse).